We begin with the raw amino-acid sequence, 138 residues long: Cytochrome b5 (138 aa).

A Cytochrome b5 heme-binding domain is found at 14–90 (GRYYRLEEVQ…SETFIIGELH (77 aa)). The heme site is built by His-49 and His-73. A helical transmembrane segment spans residues 114-136 (SWSNWVIPAIAAIIVALMYRSYM).

Belongs to the cytochrome b5 family.

The protein localises to the endoplasmic reticulum membrane. Its subcellular location is the microsome membrane. In terms of biological role, cytochrome b5 is a membrane-bound hemoprotein functioning as an electron carrier for several membrane-bound oxygenases. This chain is Cytochrome b5 (CYB5A), found in Gallus gallus (Chicken).